Reading from the N-terminus, the 178-residue chain is Large ribosomal subunit protein uL6 (178 aa).

Belongs to the universal ribosomal protein uL6 family. Part of the 50S ribosomal subunit.

Its function is as follows. This protein binds to the 23S rRNA, and is important in its secondary structure. It is located near the subunit interface in the base of the L7/L12 stalk, and near the tRNA binding site of the peptidyltransferase center. The sequence is that of Large ribosomal subunit protein uL6 from Tropheryma whipplei (strain TW08/27) (Whipple's bacillus).